The chain runs to 187 residues: Epididymal-specific lipocalin-10 (187 aa).

The N-terminal stretch at 1 to 19 (MRQGLLVLALVLVLVLVLA) is a signal peptide. The cysteines at positions 90 and 163 are disulfide-linked. Asn-149 carries an N-linked (GlcNAc...) asparagine glycan. Position 170 is an N6-acetyllysine (Lys-170).

This sequence belongs to the calycin superfamily. Lipocalin family.

It localises to the secreted. In terms of biological role, may play a role in male fertility. May act as a retinoid carrier protein within the epididymis. The chain is Epididymal-specific lipocalin-10 (LCN10) from Homo sapiens (Human).